A 210-amino-acid chain; its full sequence is Hydrogenase expression/formation protein HupD (210 aa).

Residues glutamate 22, aspartate 68, and histidine 99 each coordinate Ni(2+).

It belongs to the peptidase A31 family.

Not known. Could be involved in the processing of hydrogenase. The chain is Hydrogenase expression/formation protein HupD (hupD) from Rhodobacter capsulatus (Rhodopseudomonas capsulata).